Consider the following 518-residue polypeptide: Protein translocase subunit SecD (518 aa).

6 helical membrane passes run 9 to 29, 356 to 376, 377 to 397, 406 to 426, 451 to 473, and 486 to 506; these read IVLS…NFIQ, GKKA…LSYG, VIGL…LALL, LPGI…NVLI, AFAT…YIFG, and IGII…IDIW.

Belongs to the SecD/SecF family. SecD subfamily. In terms of assembly, forms a complex with SecF. Part of the essential Sec protein translocation apparatus which comprises SecA, SecYEG and auxiliary proteins SecDF-YajC and YidC.

The protein resides in the cell inner membrane. Its function is as follows. Part of the Sec protein translocase complex. Interacts with the SecYEG preprotein conducting channel. SecDF uses the proton motive force (PMF) to complete protein translocation after the ATP-dependent function of SecA. The polypeptide is Protein translocase subunit SecD (Rickettsia typhi (strain ATCC VR-144 / Wilmington)).